A 644-amino-acid chain; its full sequence is Chaperone protein DnaK (644 aa).

Thr200 bears the Phosphothreonine; by autocatalysis mark. A disordered region spans residues 603 to 644; it reads VMAAEQAKSGGAAPGAAPGGAQQAAPDADVVDADFKEVDDKK. The segment covering 612-630 has biased composition (low complexity); it reads GGAAPGAAPGGAQQAAPDA. Basic and acidic residues predominate over residues 635 to 644; that stretch reads ADFKEVDDKK.

This sequence belongs to the heat shock protein 70 family.

Its function is as follows. Acts as a chaperone. This is Chaperone protein DnaK from Polynucleobacter asymbioticus (strain DSM 18221 / CIP 109841 / QLW-P1DMWA-1) (Polynucleobacter necessarius subsp. asymbioticus).